A 223-amino-acid chain; its full sequence is PKHD-type hydroxylase CPS_3426 (223 aa).

The Fe2OG dioxygenase domain maps to 77-175 (KSMMPFIISE…RKVALTWIES (99 aa)). Positions 96, 98, and 156 each coordinate Fe cation. Residue Arg166 coordinates 2-oxoglutarate.

The cofactor is Fe(2+). L-ascorbate serves as cofactor.

The sequence is that of PKHD-type hydroxylase CPS_3426 from Colwellia psychrerythraea (strain 34H / ATCC BAA-681) (Vibrio psychroerythus).